Consider the following 698-residue polypeptide: Ubiquitin-like modifier-activating enzyme ATG7 (698 aa).

Positions 11–13 (FAP) match the FAP motif motif. Lys41 participates in a covalent cross-link: Glycyl lysine isopeptide (Lys-Gly) (interchain with G-Cter in ubiquitin). Residue Cys567 is the Glycyl thioester intermediate of the active site. Ser693 is subject to Phosphoserine.

The protein belongs to the ATG7 family. As to quaternary structure, homodimer. Interacts with ATG3; this interaction is essential for the transfer of ATG8-like proteins's thioester from ATG7 to ATG3 and plays a role in the conjugation of ATG12 to ATG5. Interacts with ATG12. Interacts with ATG10. Forms intermediate conjugates with GABARAPL1. Forms intermediate conjugates with ATG8-like proteins such as GABARAP, GABARAPL2 or MAP1LC3A. Interacts with EP300 acetyltransferase. Interacts with FOXO1. In terms of processing, acetylated by EP300. Polyubiquitinated on Lys-41 via 'Lys-63'-linked ubiquitin by TRIM32; this modification positiely regulates ATG8 and ATG12 activating enzyme activity leading to initiation of autophagy under metabolic stress. In terms of tissue distribution, widely expressed, especially in kidney, liver, lymph nodes and bone marrow.

Its subcellular location is the cytoplasm. It is found in the preautophagosomal structure. Functionally, E1-like activating enzyme involved in the 2 ubiquitin-like systems required for cytoplasm to vacuole transport (Cvt) and autophagy. Activates ATG12 for its conjugation with ATG5 as well as the ATG8 family proteins for their conjugation with phosphatidylethanolamine. Both systems are needed for the ATG8 association to Cvt vesicles and autophagosomes membranes. Facilitates LC3-I lipidation with phosphatidylethanolamine to form LC3-II which is found on autophagosomal membranes. Required for autophagic death induced by caspase-8 inhibition. Required for mitophagy which contributes to regulate mitochondrial quantity and quality by eliminating the mitochondria to a basal level to fulfill cellular energy requirements and preventing excess ROS production. Modulates p53/TP53 activity to regulate cell cycle and survival during metabolic stress. Also plays a key role in the maintenance of axonal homeostasis, the prevention of axonal degeneration, the maintenance of hematopoietic stem cells, the formation of Paneth cell granules, as well as in adipose differentiation. Plays a role in regulating the liver clock and glucose metabolism by mediating the autophagic degradation of CRY1 (clock repressor) in a time-dependent manner. The chain is Ubiquitin-like modifier-activating enzyme ATG7 from Mus musculus (Mouse).